The chain runs to 83 residues: Beta-toxin Ct25 (83 aa).

The first 18 residues, 1-18, serve as a signal peptide directing secretion; it reads MKVLILIIASVLLIGVEC. Residues 19–81 form the LCN-type CS-alpha/beta domain; sequence KDGYPKNSEG…VWDSATNKCG (63 aa). Intrachain disulfides connect C29–C80, C33–C54, C40–C61, and C44–C63. A Glycine amide modification is found at G81.

The protein belongs to the long (4 C-C) scorpion toxin superfamily. Sodium channel inhibitor family. Beta subfamily. In terms of tissue distribution, expressed by the venom gland.

It localises to the secreted. In terms of biological role, beta toxins bind voltage-independently at site-4 of sodium channels (Nav) and shift the voltage of activation toward more negative potentials thereby affecting sodium channel activation and promoting spontaneous and repetitive firing. The chain is Beta-toxin Ct25 from Centruroides tecomanus (Scorpion).